The sequence spans 2617 residues: Ubiquitin carboxyl-terminal hydrolase 24 (2617 aa).

The UBA domain maps to 3-44 (SEEEQHMTTLLCMGFSDPATIRKALRLAKNDINEAVALLTNE). Residues 45 to 99 (RPGLDYGGYEPMDSGGPSPGPGGGPRGDSGSDGSGPSRGGSTGGGGGFDPPPAYH) form a disordered region. Phosphoserine occurs at positions 62 and 85. The segment covering 65-92 (PGGGPRGDSGSDGSGPSRGGSTGGGGGF) has biased composition (gly residues). Tyr939 carries the phosphotyrosine modification. 2 disordered regions span residues 1030–1056 (KTSG…SGAF) and 1127–1148 (LLSE…QQHQ). 2 stretches are compositionally biased toward low complexity: residues 1031–1056 (TSGS…SGAF) and 1128–1148 (LSET…QQHQ). Phosphoserine occurs at positions 1138 and 1282. One can recognise a USP domain in the interval 1686–2039 (VGLRNGGATC…NAYMLFYQRV (354 aa)). The Nucleophile role is filled by Cys1695. The interval 1920 to 1942 (QDSSSEVGENGRNMDQGGGGSPR) is disordered. Ser1940 bears the Phosphoserine mark. The active-site Proton acceptor is the His1967. Phosphoserine occurs at positions 2044, 2074, and 2558. The disordered stretch occupies residues 2060–2087 (AEDLSLSAPSSPEISPQSSPRPHRPNND). The segment covering 2066-2079 (SAPSSPEISPQSSP) has biased composition (low complexity). A Phosphothreonine modification is found at Thr2562. Positions 2572-2617 (EKEQSGSSNGSESSPANENGERHLQQGSESPMMIGELRSDLDDVDP) are disordered. The segment covering 2576–2589 (SGSSNGSESSPANE) has biased composition (low complexity). The residue at position 2601 (Ser2601) is a Phosphoserine. Residues 2608-2617 (LRSDLDDVDP) show a composition bias toward basic and acidic residues.

The protein belongs to the peptidase C19 family.

It catalyses the reaction Thiol-dependent hydrolysis of ester, thioester, amide, peptide and isopeptide bonds formed by the C-terminal Gly of ubiquitin (a 76-residue protein attached to proteins as an intracellular targeting signal).. In terms of biological role, protease that can remove conjugated ubiquitin from target proteins and polyubiquitin chains. Deubiquitinates DDB2, preventing its proteasomal degradation. The sequence is that of Ubiquitin carboxyl-terminal hydrolase 24 (Usp24) from Mus musculus (Mouse).